The primary structure comprises 872 residues: Alanine--tRNA ligase (872 aa).

Residues His-567, His-571, Cys-669, and His-673 each coordinate Zn(2+).

This sequence belongs to the class-II aminoacyl-tRNA synthetase family. It depends on Zn(2+) as a cofactor.

The protein resides in the cytoplasm. It carries out the reaction tRNA(Ala) + L-alanine + ATP = L-alanyl-tRNA(Ala) + AMP + diphosphate. In terms of biological role, catalyzes the attachment of alanine to tRNA(Ala) in a two-step reaction: alanine is first activated by ATP to form Ala-AMP and then transferred to the acceptor end of tRNA(Ala). Also edits incorrectly charged Ser-tRNA(Ala) and Gly-tRNA(Ala) via its editing domain. In Streptococcus agalactiae serotype III (strain NEM316), this protein is Alanine--tRNA ligase.